Here is a 2839-residue protein sequence, read N- to C-terminus: Neurofibromin (2839 aa).

Ala-2 carries the post-translational modification N-acetylalanine. Phosphoserine occurs at positions 864 and 876. Residues 1251–1482 (HLLYQLLWNM…DAARRFFLDI (232 aa)) form the Ras-GAP domain. The CRAL-TRIO domain maps to 1580–1738 (EKEEFKALKT…ATLALEEDLK (159 aa)). Residues 1580–1837 (EKEEFKALKT…RTRWELSQPD (258 aa)) are lipid binding. Residues Ser-2188 and Ser-2467 each carry the phosphoserine modification. Thr-2514 carries the phosphothreonine modification. Ser-2515, Ser-2521, Ser-2523, and Ser-2543 each carry phosphoserine. Residues 2555-2571 (KRQEMESGITTPPKMRR) carry the Bipartite nuclear localization signal motif. Thr-2565 is modified (phosphothreonine). Residues Ser-2597, Ser-2802, and Ser-2817 each carry the phosphoserine modification. Positions 2787 to 2839 (TSQHSPGIDKENVELSPTTGHCNSGRTRHGSASQVQKQRSAGSFKRNSIKKIV) are disordered. The segment covering 2801 to 2827 (LSPTTGHCNSGRTRHGSASQVQKQRSA) has biased composition (polar residues).

As to quaternary structure, interacts with HTR6. Interacts with SPRED2. Ubiquitinated by RNF7/RBX2, leading to its degradation. As to expression, detected in brain, peripheral nerve, lung, colon and muscle.

It is found in the nucleus. The protein resides in the nucleolus. The protein localises to the cell membrane. Stimulates the GTPase activity of Ras. NF1 shows greater affinity for Ras GAP, but lower specific activity. May be a regulator of Ras activity. In Homo sapiens (Human), this protein is Neurofibromin (NF1).